The sequence spans 568 residues: Urease subunit alpha (568 aa).

One can recognise a Urease domain in the interval 131–568 (GGIDTHIHFI…LPMAQRYFLF (438 aa)). 3 residues coordinate Ni(2+): H136, H138, and K219. At K219 the chain carries N6-carboxylysine. Substrate is bound at residue H221. Ni(2+) contacts are provided by H248 and H274. Residue H322 is the Proton donor of the active site. D362 provides a ligand contact to Ni(2+).

This sequence belongs to the metallo-dependent hydrolases superfamily. Urease alpha subunit family. Heterotrimer of UreA (gamma), UreB (beta) and UreC (alpha) subunits. Three heterotrimers associate to form the active enzyme. The cofactor is Ni cation. In terms of processing, carboxylation allows a single lysine to coordinate two nickel ions.

Its subcellular location is the cytoplasm. It catalyses the reaction urea + 2 H2O + H(+) = hydrogencarbonate + 2 NH4(+). It participates in nitrogen metabolism; urea degradation; CO(2) and NH(3) from urea (urease route): step 1/1. This is Urease subunit alpha from Trichormus variabilis (strain ATCC 29413 / PCC 7937) (Anabaena variabilis).